Reading from the N-terminus, the 194-residue chain is dTTP/UTP pyrophosphatase (194 aa).

Asp-73 functions as the Proton acceptor in the catalytic mechanism.

This sequence belongs to the Maf family. YhdE subfamily. Requires a divalent metal cation as cofactor.

It localises to the cytoplasm. The enzyme catalyses dTTP + H2O = dTMP + diphosphate + H(+). The catalysed reaction is UTP + H2O = UMP + diphosphate + H(+). Its function is as follows. Nucleoside triphosphate pyrophosphatase that hydrolyzes dTTP and UTP. May have a dual role in cell division arrest and in preventing the incorporation of modified nucleotides into cellular nucleic acids. The sequence is that of dTTP/UTP pyrophosphatase from Clostridium botulinum (strain ATCC 19397 / Type A).